A 256-amino-acid polypeptide reads, in one-letter code: Acetylglutamate kinase (256 aa).

Substrate contacts are provided by residues 40–41 (GG), Arg-62, and Asn-153.

This sequence belongs to the acetylglutamate kinase family. ArgB subfamily.

It localises to the cytoplasm. The enzyme catalyses N-acetyl-L-glutamate + ATP = N-acetyl-L-glutamyl 5-phosphate + ADP. The protein operates within amino-acid biosynthesis; L-arginine biosynthesis; N(2)-acetyl-L-ornithine from L-glutamate: step 2/4. Functionally, catalyzes the ATP-dependent phosphorylation of N-acetyl-L-glutamate. The polypeptide is Acetylglutamate kinase (Bacillus cytotoxicus (strain DSM 22905 / CIP 110041 / 391-98 / NVH 391-98)).